The chain runs to 619 residues: uncharacterized protein (619 aa).

Positions Met-1 to Thr-21 are cleaved as a signal peptide.

This is an uncharacterized protein from Archaeoglobus fulgidus (strain ATCC 49558 / DSM 4304 / JCM 9628 / NBRC 100126 / VC-16).